Reading from the N-terminus, the 239-residue chain is Putative transcriptional regulator of 2-aminoethylphosphonate degradation operons (239 aa).

The HTH gntR-type domain maps to 8–76 (IPQYLLIKAQ…DRRGWFVTPE (69 aa)). Positions 36-55 (ERELCAIFNTTRITIRESLA) form a DNA-binding region, H-T-H motif.

The protein is Putative transcriptional regulator of 2-aminoethylphosphonate degradation operons (phnR) of Salmonella paratyphi A (strain ATCC 9150 / SARB42).